Reading from the N-terminus, the 362-residue chain is MNIDGIPTRTLRAHPDRRAIDIIDQTRLPHALHWVRVATLEEAAHAIRAMQVRGAPLIGATAAYGLAIALDFEASDRRLAEAVALLGATRPTAVNLHWALARMENILRPLAPEARCDAAWAEAAAIAEEDVAQNAAIGQHGLKLWNDLIVADGQTLNIMTHCNAGWLATVDWGTALSPVYAAHDAGVPVHVWVSETRPRNQGLLTAWELEQHGVPHTLIADNAAGLLMRNGKVDAVIVGADRIAANGDVANKVGTYLKALACADNGIPFYVAAPRSTLDFACPEGASIPIEERDGDEFRLVHGLDSRGVPSALRQLPAGEDVANPAFDVTPNWLVKAIITERGVCPASRDGLLALYPEEARG.

Substrate-binding positions include 53-55 (RGA), arginine 90, and glutamine 201. The Proton donor role is filled by aspartate 241. Substrate is bound at residue 251 to 252 (NK).

This sequence belongs to the eIF-2B alpha/beta/delta subunits family. MtnA subfamily.

The catalysed reaction is 5-(methylsulfanyl)-alpha-D-ribose 1-phosphate = 5-(methylsulfanyl)-D-ribulose 1-phosphate. It participates in amino-acid biosynthesis; L-methionine biosynthesis via salvage pathway; L-methionine from S-methyl-5-thio-alpha-D-ribose 1-phosphate: step 1/6. Its function is as follows. Catalyzes the interconversion of methylthioribose-1-phosphate (MTR-1-P) into methylthioribulose-1-phosphate (MTRu-1-P). This Dechloromonas aromatica (strain RCB) protein is Methylthioribose-1-phosphate isomerase.